A 525-amino-acid chain; its full sequence is Lymphocyte activation gene 3 protein (525 aa).

The signal sequence occupies residues 1–23 (MRQDLFLDLLLLQLLWEAPVVSS). Residues 24 to 442 (GPGKELSVVW…ISGDLKGGHL (419 aa)) lie on the Extracellular side of the membrane. The Ig-like V-type domain maps to 37 to 163 (GAPVHLPCSL…FSCSLRLRVG (127 aa)). Positions 37–246 (GAPVHLPCSL…LTYRDGFNVS (210 aa)) are interaction with FGL1. A disulfide bridge connects residues Cys-44 and Cys-156. 3 consecutive Ig-like C2-type domains span residues 164–246 (QASM…FNVS), 258–341 (PVAP…AAVT), and 345–412 (ITVT…EGQK). Asn-184 is a glycosylation site (N-linked (GlcNAc...) asparagine). Cys-185 and Cys-235 form a disulfide bridge. Residues Asn-244 and Asn-309 are each glycosylated (N-linked (GlcNAc...) asparagine). Intrachain disulfides connect Cys-276-Cys-327 and Cys-363-Cys-405. Positions 422–442 (ESSSGAWSAKRISGDLKGGHL) are connecting peptide. Residues 443 to 463 (FLSLILGALALFLLVTGAFGF) form a helical membrane-spanning segment. At 464-525 (HLWRRQLLRR…PELEPESRQL (62 aa)) the chain is on the cytoplasmic side. The tract at residues 486–525 (PVQSKIEELEREPETEMEPETEPDPEPQPEPELEPESRQL) is disordered. The short motif at 490–495 (KIEELE) is the KIEELE motif element. The segment covering 490 to 499 (KIEELEREPE) has biased composition (basic and acidic residues). The interval 493-522 (ELEREPETEMEPETEPDPEPQPEPELEPES) is 15 X 2 AA tandem repeats of E-X. The span at 500–519 (TEMEPETEPDPEPQPEPELE) shows a compositional bias: acidic residues.

This sequence belongs to the LAG3 family. As to quaternary structure, interacts with MHC class II (MHC-II); selectively recognizes stable complexes of peptide and MHC-II. Interacts with FGL1 (via the Fibrinogen C-terminal domain). Post-translationally, proteolytically cleaved by ADAM10 and ADAM17 within the connecting peptide region, leading to release of Secreted lymphocyte activation gene 3 protein (sLAG-3). ADAM10 mediates constitutive cleavage, but cleavage increases following T-cell activation, whereas shedding by ADAM17 is induced by TCR signaling in a PRKCQ-dependent manner.

It localises to the cell membrane. The protein resides in the secreted. Lymphocyte activation gene 3 protein: Inhibitory receptor on antigen activated T-cells. Delivers inhibitory signals upon binding to ligands, such as FGL1. FGL1 constitutes a major ligand of LAG3 and is responsible for LAG3 T-cell inhibitory function. Following TCR engagement, LAG3 associates with CD3-TCR in the immunological synapse and directly inhibits T-cell activation. May inhibit antigen-specific T-cell activation in synergy with PDCD1/PD-1, possibly by acting as a coreceptor for PDCD1/PD-1. Negatively regulates the proliferation, activation, effector function and homeostasis of both CD8(+) and CD4(+) T-cells. Also mediates immune tolerance: constitutively expressed on a subset of regulatory T-cells (Tregs) and contributes to their suppressive function. Also acts as a negative regulator of plasmacytoid dendritic cell (pDCs) activation. Binds MHC class II (MHC-II); the precise role of MHC-II-binding is however unclear. In terms of biological role, may function as a ligand for MHC class II (MHC-II) on antigen-presenting cells (APC), promoting APC activation/maturation and driving Th1 immune response. This Rattus norvegicus (Rat) protein is Lymphocyte activation gene 3 protein (Lag3).